The chain runs to 141 residues: MAARLCCQLDSARDVLLLRPFGPQSSGPSFPRPAAGSAASSASSPSPSDESDLPLGRLPACFASASGPCCLVFTCAELRTMDSTVNFVSWHANRQLGMPSKDLWTPYIKDQLLTKWEEGSIDPRLSIFVLGGCRHKCMRLL.

Over residues 24 to 48 (QSSGPSFPRPAAGSAASSASSPSPS) the composition is skewed to low complexity. Positions 24-52 (QSSGPSFPRPAAGSAASSASSPSPSDESD) are disordered. The mitochondrial targeting sequence stretch occupies residues 68 to 113 (PCCLVFTCAELRTMDSTVNFVSWHANRQLGMPSKDLWTPYIKDQLL).

The protein belongs to the orthohepadnavirus protein X family. In terms of assembly, may form homodimer. May interact with host CEBPA, CFLAR, CREB1, DDB1, E4F1, HBXIP, HSPD1/HSP60, NFKBIA, POLR2E and SMAD4. Interacts with host SMC5-SMC6 complex and induces its degradation. Interacts with host TRPC4AP; leading to prevent ubiquitination of TRPC4AP. Interacts with host PLSCR1; this interaction promotes ubiquitination and degradation of HBx and impairs HBx-mediated cell proliferation. Post-translationally, a fraction may be phosphorylated in insect cells and HepG2 cells, a human hepatoblastoma cell line. Phosphorylated in vitro by host protein kinase C or mitogen-activated protein kinase. N-acetylated in insect cells.

It is found in the host cytoplasm. The protein resides in the host nucleus. Its subcellular location is the host mitochondrion. Its function is as follows. Multifunctional protein that plays a role in silencing host antiviral defenses and promoting viral transcription. Does not seem to be essential for HBV infection. May be directly involved in development of cirrhosis and liver cancer (hepatocellular carcinoma). Most of cytosolic activities involve modulation of cytosolic calcium. The effect on apoptosis is controversial depending on the cell types in which the studies have been conducted. May induce apoptosis by localizing in mitochondria and causing loss of mitochondrial membrane potential. May also modulate apoptosis by binding host CFLAR, a key regulator of the death-inducing signaling complex (DISC). Promotes viral transcription by using the host E3 ubiquitin ligase DDB1 to target the SMC5-SMC6 complex to proteasomal degradation. This host complex would otherwise bind to viral episomal DNA, and prevents its transcription. Moderately stimulates transcription of many different viral and cellular transcription elements. Promoters and enhancers stimulated by HBx contain DNA binding sites for NF-kappa-B, AP-1, AP-2, c-EBP, ATF/CREB, or the calcium-activated factor NF-AT. This Woodchuck hepatitis B virus (isolate 7) (WHV) protein is Protein X.